The primary structure comprises 242 residues: Venom redulysin 2 (242 aa).

Positions 1 to 19 are cleaved as a signal peptide; it reads MSKIWILLLLVGAVQFARG. Positions 20–46 are excised as a propeptide; that stretch reads FPALEEEQEDDVIDWPSFEYDLSDEER.

Belongs to the redulysin-like family. Contains 5 disulfide bonds. In terms of tissue distribution, expressed by the venom gland (posterior main gland) (at protein level).

Its subcellular location is the secreted. In terms of biological role, highly abundant protein that may be responsible for the observed disruption of sensory neuron membranes, since it is homologous to proteins such as trialysin, which forms pores in lipid bilayers. Probable insecticidal toxin. The protein is Venom redulysin 2 of Platymeris rhadamanthus (Red spot assassin bug).